A 152-amino-acid polypeptide reads, in one-letter code: Large ribosomal subunit protein uL15 (152 aa).

Positions 1–57 (MTSTLNTLKSNSGSRKKKLRKGRGIAAGQGASCGFGMRGQKSRSGRPTRPGFEGGQM) are disordered. Residues 14–23 (SRKKKLRKGR) show a composition bias toward basic residues. Residues 25–37 (IAAGQGASCGFGM) are compositionally biased toward gly residues.

This sequence belongs to the universal ribosomal protein uL15 family. Part of the 50S ribosomal subunit.

Binds to the 23S rRNA. The sequence is that of Large ribosomal subunit protein uL15 from Prochlorococcus marinus (strain MIT 9215).